A 119-amino-acid chain; its full sequence is MAKSSFKLDHTLERRQAEANRIREKYSDRIPVIVEKAERSDIPDIDKKKYLVPADLTVGQFVYVVRKRIKLSPEKAIFIFVKNTLPPTAALMSAIYEENKDEDGFLYMTYSGENTFGLL.

The Phosphatidylethanolamine amidated glycine moiety is linked to residue Gly117. A propeptide spans 118–119 (removed in mature form); sequence LL.

Belongs to the ATG8 family. Interacts with ATG4. The C-terminal 2 residues are removed by ATG4 to expose Gly-117 at the C-terminus. The C-terminal Gly is then amidated with phosphatidylethanolamine by an activating system similar to that for ubiquitin.

It is found in the cytoplasmic vesicle. The protein resides in the autophagosome membrane. It localises to the vacuole membrane. Its subcellular location is the cytoplasm. The protein localises to the cytoskeleton. Ubiquitin-like modifier involved in autophagosomes formation. May mediate the delivery of the autophagosomes to the vacuole via the microtubule cytoskeleton. The protein is Autophagy-related protein 8B (ATG8B) of Oryza sativa subsp. indica (Rice).